Here is a 263-residue protein sequence, read N- to C-terminus: Methylesterase 2 (263 aa).

The Acyl-ester intermediate role is filled by S85. Catalysis depends on charge relay system residues D213 and H241.

This sequence belongs to the AB hydrolase superfamily. Methylesterase family.

It catalyses the reaction methyl (indol-3-yl)acetate + H2O = (indol-3-yl)acetate + methanol + H(+). It carries out the reaction methyl (-)-jasmonate + H2O = jasmonate + methanol + H(+). The enzyme catalyses methyl salicylate + H2O = salicylate + methanol + H(+). It participates in plant hormone biosynthesis. It functions in the pathway lipid metabolism; oxylipin biosynthesis. With respect to regulation, esterase activity is down-regulated by salicylic acid (SA). Down-regulated by agrochemicals Paraoxon, 3,4-DCl and Profenofos. Its function is as follows. Methylesterase shown to have carboxylesterase activity, methyl indole-3-acetic acid (MeIAA) esterase activity, methyl salicylate (MeSA) esterase activity and methyl jasmonate (MeJA) esterase activity in vitro. This is Methylesterase 2 from Arabidopsis thaliana (Mouse-ear cress).